The primary structure comprises 186 residues: Threonylcarbamoyl-AMP synthase (186 aa).

The YrdC-like domain occupies 3 to 186 (ELTLDSAVAT…DALSGNVLRS (184 aa)).

This sequence belongs to the SUA5 family. TsaC subfamily.

The protein resides in the cytoplasm. It carries out the reaction L-threonine + hydrogencarbonate + ATP = L-threonylcarbamoyladenylate + diphosphate + H2O. Its function is as follows. Required for the formation of a threonylcarbamoyl group on adenosine at position 37 (t(6)A37) in tRNAs that read codons beginning with adenine. Catalyzes the conversion of L-threonine, HCO(3)(-)/CO(2) and ATP to give threonylcarbamoyl-AMP (TC-AMP) as the acyladenylate intermediate, with the release of diphosphate. This chain is Threonylcarbamoyl-AMP synthase, found in Stenotrophomonas maltophilia (strain K279a).